A 171-amino-acid polypeptide reads, in one-letter code: 3-hydroxydecanoyl-[acyl-carrier-protein] dehydratase (171 aa).

Residue histidine 70 is part of the active site.

This sequence belongs to the thioester dehydratase family. FabA subfamily. Homodimer.

It localises to the cytoplasm. The catalysed reaction is a (3R)-hydroxyacyl-[ACP] = a (2E)-enoyl-[ACP] + H2O. It catalyses the reaction (3R)-hydroxydecanoyl-[ACP] = (2E)-decenoyl-[ACP] + H2O. The enzyme catalyses (2E)-decenoyl-[ACP] = (3Z)-decenoyl-[ACP]. It functions in the pathway lipid metabolism; fatty acid biosynthesis. Necessary for the introduction of cis unsaturation into fatty acids. Catalyzes the dehydration of (3R)-3-hydroxydecanoyl-ACP to E-(2)-decenoyl-ACP and then its isomerization to Z-(3)-decenoyl-ACP. Can catalyze the dehydratase reaction for beta-hydroxyacyl-ACPs with saturated chain lengths up to 16:0, being most active on intermediate chain length. The polypeptide is 3-hydroxydecanoyl-[acyl-carrier-protein] dehydratase (Colwellia psychrerythraea (strain 34H / ATCC BAA-681) (Vibrio psychroerythus)).